A 303-amino-acid chain; its full sequence is Oxygen-dependent coproporphyrinogen-III oxidase (303 aa).

Position 93 (S93) interacts with substrate. A divalent metal cation is bound by residues H97 and H107. H107 functions as the Proton donor in the catalytic mechanism. Residue 109-111 participates in substrate binding; that stretch reads NVR. H146 and H176 together coordinate a divalent metal cation. Residues 241-276 form an important for dimerization region; it reads YVEFNLVYDRGTLFGLQSGGRTESILMSLPPQVRWG. 259-261 contributes to the substrate binding site; the sequence is GGR.

This sequence belongs to the aerobic coproporphyrinogen-III oxidase family. Homodimer. It depends on a divalent metal cation as a cofactor.

It is found in the cytoplasm. It carries out the reaction coproporphyrinogen III + O2 + 2 H(+) = protoporphyrinogen IX + 2 CO2 + 2 H2O. It functions in the pathway porphyrin-containing compound metabolism; protoporphyrin-IX biosynthesis; protoporphyrinogen-IX from coproporphyrinogen-III (O2 route): step 1/1. Functionally, involved in the heme biosynthesis. Catalyzes the aerobic oxidative decarboxylation of propionate groups of rings A and B of coproporphyrinogen-III to yield the vinyl groups in protoporphyrinogen-IX. In Pseudomonas entomophila (strain L48), this protein is Oxygen-dependent coproporphyrinogen-III oxidase.